Reading from the N-terminus, the 577-residue chain is Jasmonoyl--L-amino acid synthetase JAR4 (577 aa).

Position 99 (serine 99) interacts with ATP. Residue serine 102 coordinates jasmonate. ATP contacts are provided by residues methionine 119, threonine 122, glycine 163, asparagine 168, and 331-336 (GSSEGW). 166–170 (TTNVY) contacts an L-alpha-amino acid. Position 328-331 (328-331 (ADYG)) interacts with jasmonate. Residue 531–535 (KILDH) coordinates an L-alpha-amino acid.

It belongs to the IAA-amido conjugating enzyme family.

The catalysed reaction is a jasmonate + an L-alpha-amino acid + ATP = a jasmonyl-L-amino acid + AMP + diphosphate + H(+). In terms of biological role, catalyzes the synthesis of jasmonate-amino acid conjugates by adenylation. Catalyzes the conjugation of jasmonate (JA) to Ile, Leu and Val. Catalyzes the conjugation of jasmonate (JA) to Ile to mediate defense signaling and resistance to the herbivore Manduca sexta caterpillars. The polypeptide is Jasmonoyl--L-amino acid synthetase JAR4 (Nicotiana attenuata (Coyote tobacco)).